The primary structure comprises 395 residues: Putative transcription factor 079L (395 aa).

This sequence belongs to the IIV-6 282R family.

Transcription activation. The protein is Putative transcription factor 079L of Aedes vexans (Inland floodwater mosquito).